We begin with the raw amino-acid sequence, 373 residues long: D-alanine--D-alanine ligase (373 aa).

The ATP-grasp domain maps to 156-363 (KKLWSAAGLP…YPTLLATMVE (208 aa)). Residue 184–239 (LQRLGLPAYVKPARGGSSIGVSRVSSFDELPAAIAAARRHDPKVIVEAAINGRELE) coordinates ATP. Asp318, Glu330, and Asn332 together coordinate Mg(2+).

This sequence belongs to the D-alanine--D-alanine ligase family. It depends on Mg(2+) as a cofactor. Requires Mn(2+) as cofactor.

The protein resides in the cytoplasm. It carries out the reaction 2 D-alanine + ATP = D-alanyl-D-alanine + ADP + phosphate + H(+). It functions in the pathway cell wall biogenesis; peptidoglycan biosynthesis. Functionally, cell wall formation. The sequence is that of D-alanine--D-alanine ligase from Mycobacterium ulcerans (strain Agy99).